A 326-amino-acid chain; its full sequence is Protoheme IX farnesyltransferase (326 aa).

8 helical membrane-spanning segments follow: residues 35–55 (LIPLLLATTLGGMALTEGWPL), 60–80 (LVCTLGGGALASAAAGVLNCL), 106–126 (SAFIGAIACTLAAAMLLVSGV), 129–149 (LAAGLSLLGLCSYVLLYTALL), 157–177 (IVIGGVAGAIPPLVGAAAATG), 185–205 (WLFALVMVWTPAHFWALALLL), 242–262 (GFGVLALPTGGVFYGLILLPF), and 283–303 (AKGLFRWSILYLFGICLLLIL).

Belongs to the UbiA prenyltransferase family. Protoheme IX farnesyltransferase subfamily.

It localises to the cell inner membrane. The enzyme catalyses heme b + (2E,6E)-farnesyl diphosphate + H2O = Fe(II)-heme o + diphosphate. Its pathway is porphyrin-containing compound metabolism; heme O biosynthesis; heme O from protoheme: step 1/1. Converts heme B (protoheme IX) to heme O by substitution of the vinyl group on carbon 2 of heme B porphyrin ring with a hydroxyethyl farnesyl side group. This Parasynechococcus marenigrum (strain WH8102) protein is Protoheme IX farnesyltransferase.